We begin with the raw amino-acid sequence, 931 residues long: Protein unc-45 homolog B (931 aa).

TPR repeat units lie at residues 6–39 (AVQLKEEGNRHFQLQDYKAATNSYSQALKLTKDK), 43–76 (ATLYRNRAACGLKTESYVQAASDASRAIDINSSD), and 77–110 (IKALYRRCQALEHLGKLDQAFKDVQRCATLEPRN). ARM repeat units follow at residues 169 to 208 (EAGAEKIFQNNGVALLLQLLDTKKPELVLAAVRTLSGMCS), 211 to 250 (QARATVILHAVRIDRICSLMAVENEEMSLAVCNLLQAIID), and 751 to 790 (DKLRQKIFKERALPDIENYMFENHDQLRQAATECMCNMVL).

In terms of assembly, interacts with HSP90 in an ATP-independent manner. Interacts with UBE4B; the interaction may target UNC45B for proteasomal degradation. As to expression, expressed in eye lens tissues. Expressed in muscle (at protein level).

It localises to the cytoplasm. Its subcellular location is the myofibril. It is found in the sarcomere. The protein localises to the z line. The protein resides in the a band. It localises to the perinuclear region. Its subcellular location is the cytosol. Functionally, acts as a co-chaperone for HSP90 and is required for proper folding of the myosin motor domain. Plays a role in sarcomere formation during muscle cell development. Is necessary for normal early lens development. The sequence is that of Protein unc-45 homolog B from Homo sapiens (Human).